A 1062-amino-acid polypeptide reads, in one-letter code: NACHT, LRR and PYD domains-containing protein 2 (1062 aa).

The 94-residue stretch at 1–94 folds into the Pyrin domain; the sequence is MVSSAQMGFN…SERAKDEVRE (94 aa). The region spanning 207–526 is the NACHT domain; the sequence is YTVVLYGPAG…LEKEEEEDRD (320 aa). Residue 213-220 coordinates ATP; it reads GPAGLGKT. The residue at position 671 (S671) is a Phosphoserine. LRR repeat units lie at residues 812–832, 841–861, 869–889, 898–918, 926–946, 955–976, 983–1003, and 1010–1033; these read SLTCVNLSDNELLDEGAKLLY, FLQRLSLENCHLTEANCKDLA, ELTHLCLAKNPIGNTGVKFLC, KLQTLVLWNCDITSDGCCDLT, SLLCLDLGLNHIGVKGMKFLC, NLRCLWLWGCSIPPFSCEDLCS, SLVTLDLGQNPLGSSGVKMLF, and SGTLRTLRLKIDDFNDELNKLLEE.

Belongs to the NLRP family. Interacts with CHUK. Interacts with IKBKB. Interacts with IKBKG. Interacts with MEFV. Interacts with PYCARD. Interacts (via pyrin domain) with PYDC2. Interacts with CARD8. Expressed at high levels in lung, placenta and thymus and at lower levels in ovary, intestine and brain. Highly abundant in oocytes and early embryos, however poorly expressed in somatic tissues such as brain, kidney, liver and spinal cord.

The protein localises to the cytoplasm. Suppresses TNF- and CD40-induced NFKB1 activity at the level of the IKK complex, by inhibiting NFKBIA degradation induced by TNF. When associated with PYCARD, activates CASP1, leading to the secretion of mature pro-inflammatory cytokine IL1B. May be a component of the inflammasome, a protein complex which also includes PYCARD, CARD8 and CASP1 and whose function would be the activation of pro-inflammatory caspases. The sequence is that of NACHT, LRR and PYD domains-containing protein 2 (NLRP2) from Homo sapiens (Human).